The primary structure comprises 80 residues: MQQQQQQQQQQQQQQQQQQQQQQQQQQQQQQQQQQQQQQQQQQQQQQQQQQQQQQQQQQQQQQQQQQQQQQQQQQQQQQQ.

In terms of tissue distribution, specifically found in brains from SCA8 patients (at protein level).

The protein localises to the nucleus. The chain is Ataxin-8 (ATXN8) from Homo sapiens (Human).